Here is a 165-residue protein sequence, read N- to C-terminus: MYCPFCSANDTKVIDSRLVSDGHQVRRRRECLACHERYTTFESAELVMPRIIKRDGSREPFNEDKMLSGLTRALEKRPVSMEQIELAVNKLKSQMRATGEREISSEMLGDLIMAQLKELDKVAYLRFASVYLSFEDISEFADEITRLGKEKNGKAKKAKPAKTAK.

The segment at 3–34 (CPFCSANDTKVIDSRLVSDGHQVRRRRECLAC) is a zinc-finger region. The 91-residue stretch at 49-139 (PRIIKRDGSR…VYLSFEDISE (91 aa)) folds into the ATP-cone domain.

It belongs to the NrdR family. It depends on Zn(2+) as a cofactor.

Negatively regulates transcription of bacterial ribonucleotide reductase nrd genes and operons by binding to NrdR-boxes. This Colwellia psychrerythraea (strain 34H / ATCC BAA-681) (Vibrio psychroerythus) protein is Transcriptional repressor NrdR.